The primary structure comprises 354 residues: GDSL esterase/lipase At5g03820 (354 aa).

Residues 1-24 (MKMFIIMLMTFSVIACFYAGVGTG) form the signal peptide. The active-site Nucleophile is the S37. 7 N-linked (GlcNAc...) asparagine glycosylation sites follow: N66, N100, N237, N256, N257, N261, and N321. Residues D329 and H332 contribute to the active site.

This sequence belongs to the 'GDSL' lipolytic enzyme family.

It localises to the secreted. The sequence is that of GDSL esterase/lipase At5g03820 from Arabidopsis thaliana (Mouse-ear cress).